Consider the following 257-residue polypeptide: 6-phosphogluconolactonase (257 aa).

The residue at position 2 (A2) is an N-acetylalanine. S49 is subject to Phosphoserine. An N6-acetyllysine modification is found at K180.

This sequence belongs to the glucosamine/galactosamine-6-phosphate isomerase family. 6-phosphogluconolactonase subfamily.

It is found in the cytoplasm. The enzyme catalyses 6-phospho-D-glucono-1,5-lactone + H2O = 6-phospho-D-gluconate + H(+). It participates in carbohydrate degradation; pentose phosphate pathway; D-ribulose 5-phosphate from D-glucose 6-phosphate (oxidative stage): step 2/3. In terms of biological role, hydrolysis of 6-phosphogluconolactone to 6-phosphogluconate. In Rattus norvegicus (Rat), this protein is 6-phosphogluconolactonase.